A 75-amino-acid polypeptide reads, in one-letter code: MMSKLGVLLTICLLLFPLTALPMDGDEPANRPVERMQDNISSEQYPLFEKRRDCCTPPKKCKDRQCKPQRCCAGR.

Residues 1-20 (MMSKLGVLLTICLLLFPLTA) form the signal peptide. Residues 21–51 (LPMDGDEPANRPVERMQDNISSEQYPLFEKR) constitute a propeptide that is removed on maturation. 3 disulfides stabilise this stretch: C54-C66, C55-C71, and C61-C72. A 4-hydroxyproline; partial mark is found at P57 and P58. P68 carries the post-translational modification 4-hydroxyproline. An Alanine amide modification is found at A73.

The protein belongs to the conotoxin M superfamily. Post-translationally, hydroxylated; hydroxylations improve the ability to block Nav1.4/SCN4A sodium channels but does not affect folding. Expressed by the venom duct.

The protein localises to the secreted. In terms of biological role, mu-conotoxins block voltage-gated sodium channels (Nav). This toxin potently blocks rat Nav1.4/SCN4A (IC(50)= 19-110 nM). It also moderately blocks rNav1.1/SCN1A (Kd=260 nM), rNav1.2/SCN2A (IC(50)=2.7-17.8 uM), and mNav1.6/SCN8A (IC(50)=680 nM). The inhibition is reversible. In vivo, induces paralysis to an isolated skeletal muscle preparation from frog (cutaneous pectoralis) within a few minutes. The protein is Mu-conotoxin GIIIA of Conus geographus (Geography cone).